A 73-amino-acid polypeptide reads, in one-letter code: Putative membrane protein insertion efficiency factor (73 aa).

The protein belongs to the UPF0161 family.

It localises to the cell inner membrane. Functionally, could be involved in insertion of integral membrane proteins into the membrane. The polypeptide is Putative membrane protein insertion efficiency factor (Jannaschia sp. (strain CCS1)).